The following is a 316-amino-acid chain: tRNA methyltransferase 10 homolog B (316 aa).

Positions 73–98 (EKIVAAKKSKRKQEKERRKANRVENS) form a coiled coil. The disordered stretch occupies residues 77 to 96 (AAKKSKRKQEKERRKANRVE). The region spanning 113 to 310 (IKERLLEAKH…KGVSSRKGYV (198 aa)) is the SAM-dependent MTase TRM10-type domain.

The protein belongs to the class IV-like SAM-binding methyltransferase superfamily. TRM10 family.

The catalysed reaction is guanosine(9) in tRNA + S-adenosyl-L-methionine = N(1)-methylguanosine(9) in tRNA + S-adenosyl-L-homocysteine + H(+). Its function is as follows. S-adenosyl-L-methionine-dependent guanine N(1)-methyltransferase that catalyzes the formation of N(1)-methylguanine at position 9 (m1G9) in tRNAs. Probably not able to catalyze formation of N(1)-methyladenine at position 9 (m1A9) in tRNAs. In Bos taurus (Bovine), this protein is tRNA methyltransferase 10 homolog B (TRMT10B).